The chain runs to 188 residues: Multiple organellar RNA editing factor 7, mitochondrial (188 aa).

The N-terminal 20 residues, 1 to 20 (MARIIRRPLNLTAAVRFRLS), are a transit peptide targeting the mitochondrion. The segment at 169–188 (DAKSGVVKKKHRRKRKKKLI) is disordered. Over residues 174-188 (VVKKKHRRKRKKKLI) the composition is skewed to basic residues.

Belongs to the MORF family. Heterodimers with MORF8/RIP1, MORF5/RIP5 and MORF6/RIP6.

It is found in the mitochondrion. Its function is as follows. Involved in organellar RNA editing. Required for the processing of few RNA editing sites in mitochondria. The sequence is that of Multiple organellar RNA editing factor 7, mitochondrial from Arabidopsis thaliana (Mouse-ear cress).